The primary structure comprises 1162 residues: Paired amphipathic helix protein Sin3-like 5 (1162 aa).

The tract at residues 1-37 (MKRVREEVYVEPQMRGPTVSSRGETNGRPSTISGGGT) is disordered. Positions 18–30 (TVSSRGETNGRPS) are enriched in polar residues. PAH domains are found at residues 28–109 (RPST…LPKG) and 123–193 (KPVD…LPDF). Disordered regions lie at residues 702–727 (RVSD…ESCE), 743–779 (QKLP…DDDN), 803–830 (GGQV…SNEG), and 1121–1143 (KKAT…ELSR). S817 carries the post-translational modification Phosphoserine. The span at 1123-1139 (ATLNPTGPENVKTSDSS) shows a compositional bias: polar residues.

The protein localises to the nucleus. Functionally, acts as a transcriptional repressor. Plays roles in regulating gene expression and genome stability. In Arabidopsis thaliana (Mouse-ear cress), this protein is Paired amphipathic helix protein Sin3-like 5 (SNL5).